We begin with the raw amino-acid sequence, 315 residues long: 6-phosphogluconolactonase-like protein 2 (315 aa).

Residues S42 and S64 each carry the phosphoserine modification. Residues C59–E85 form a disordered region. Residues K60 to S70 are compositionally biased toward low complexity.

It belongs to the glucosamine/galactosamine-6-phosphate isomerase family. 6-phosphogluconolactonase subfamily.

Its subcellular location is the cytoplasm. In terms of biological role, may be involved in regulation of tRNA subcellular distribution. This chain is 6-phosphogluconolactonase-like protein 2 (SOL2), found in Saccharomyces cerevisiae (strain ATCC 204508 / S288c) (Baker's yeast).